The following is a 609-amino-acid chain: MNREERLKRQERIRNFSIIAHIDHGKSTLADRILEKTGALSERELREQTLDMMELERERGITIKLNAVQLTYKAKNGEEYIFHLIDTPGHVDFTYEVSRSLAACEGAILVVDAAQGIEAQTLANVYLAIDNNLEILPVINKIDLPSAEPERVRQEIEDVIGLDASEAVLASAKVGIGVEDILKQIVEKIPAPSGDPDAPLKALIFDSLYDPYRGVVAYVRIVDGTVKPGQRIKMMSTGKEFEVTEVGVFTPKPKVVDELMVGDVGYLTASIKNVQDTRVGDTITDAERPAAEPLPGYRKLNPMVFCGMYPIDTARYNDLREALEKLQLNDAALHFEPETSQALGFGFRCGFLGLLHMEIIQERIEREFHIDLITTAPSVVYKVYLTDGTEVDVDNPTNMPDPQKIDRIEEPYVKATIMVPNDYVGPVMELCQGKRGTFVDMQYLDEKRVMLIYDIPLSEIVYDFFDALKSNTKGYASFDYELIGYRPSNLVKMDILLNGEKIDALSFIVHRDSAYERGKVIVEKLKDLIPRQQFEVPVQAAIGNKIIARSTIKALRKNVLAKCYGGDVSRKRKLLEKQKEGKKRMKQIGSVEVPQEAFMAVLKIDDQKK.

The tr-type G domain maps to 11-193; it reads ERIRNFSIIA…QIVEKIPAPS (183 aa). Residues 23–28 and 140–143 each bind GTP; these read DHGKST and NKID.

This sequence belongs to the TRAFAC class translation factor GTPase superfamily. Classic translation factor GTPase family. LepA subfamily.

Its subcellular location is the cell membrane. The enzyme catalyses GTP + H2O = GDP + phosphate + H(+). Required for accurate and efficient protein synthesis under certain stress conditions. May act as a fidelity factor of the translation reaction, by catalyzing a one-codon backward translocation of tRNAs on improperly translocated ribosomes. Back-translocation proceeds from a post-translocation (POST) complex to a pre-translocation (PRE) complex, thus giving elongation factor G a second chance to translocate the tRNAs correctly. Binds to ribosomes in a GTP-dependent manner. This is Elongation factor 4 from Geobacillus thermodenitrificans (strain NG80-2).